A 337-amino-acid chain; its full sequence is MAVEMFYDDDADLSIIQGRKVAVIGYGSQGHAHSLSLRDSGVEVRVGLAEGSKSRPKAEEAGLTVGTPAEVSAWADVIMLLAPDTAQASIFTNDIEPNLKDGDALFFGHGLNIHFGLIKPPANVTIGMVAPKGPGHLVRRQFVDGKGVPALIAIDQDPKGEGQALALSYAKGIGGTRAGVIKTTFKEETETDLFGEQAVLCGGTEELVKTGFEVMVEAGYAPEMAYFEVLHELKLIVDLMYEGGIARMNYSVSDTAEFGGYLSGPRVIDAGTKERMKEILKDIQDGTFVKRLVANVEGGNKELEGLRKQNAEHPIEVTGAKLRGLMSWVDRPITETA.

Residues 3 to 183 (VEMFYDDDAD…GGTRAGVIKT (181 aa)) enclose the KARI N-terminal Rossmann domain. NADP(+)-binding positions include 26–29 (YGSQ), serine 52, serine 54, and 84–87 (DTAQ). Residue histidine 109 is part of the active site. Glycine 135 provides a ligand contact to NADP(+). Positions 184 to 329 (TFKEETETDL…AKLRGLMSWV (146 aa)) constitute a KARI C-terminal knotted domain. Residues aspartate 192, glutamate 196, glutamate 228, and glutamate 232 each coordinate Mg(2+). Serine 253 contributes to the substrate binding site.

This sequence belongs to the ketol-acid reductoisomerase family. Mg(2+) is required as a cofactor.

It carries out the reaction (2R)-2,3-dihydroxy-3-methylbutanoate + NADP(+) = (2S)-2-acetolactate + NADPH + H(+). The catalysed reaction is (2R,3R)-2,3-dihydroxy-3-methylpentanoate + NADP(+) = (S)-2-ethyl-2-hydroxy-3-oxobutanoate + NADPH + H(+). The protein operates within amino-acid biosynthesis; L-isoleucine biosynthesis; L-isoleucine from 2-oxobutanoate: step 2/4. It functions in the pathway amino-acid biosynthesis; L-valine biosynthesis; L-valine from pyruvate: step 2/4. Functionally, involved in the biosynthesis of branched-chain amino acids (BCAA). Catalyzes an alkyl-migration followed by a ketol-acid reduction of (S)-2-acetolactate (S2AL) to yield (R)-2,3-dihydroxy-isovalerate. In the isomerase reaction, S2AL is rearranged via a Mg-dependent methyl migration to produce 3-hydroxy-3-methyl-2-ketobutyrate (HMKB). In the reductase reaction, this 2-ketoacid undergoes a metal-dependent reduction by NADPH to yield (R)-2,3-dihydroxy-isovalerate. The polypeptide is Ketol-acid reductoisomerase (NADP(+)) (Nocardia farcinica (strain IFM 10152)).